Consider the following 175-residue polypeptide: VQ motif-containing protein 25 (175 aa).

A VQ motif is present at residues Phe50–Gly59.

It is found in the nucleus. Functionally, may function as negative regulator of plant defense. This chain is VQ motif-containing protein 25, found in Arabidopsis thaliana (Mouse-ear cress).